A 278-amino-acid chain; its full sequence is MNLSDVPLRPGSAELLPVRGVRALQAFDNRDWVAVEVPVALEFNGIAHAVMLATPTDLADFALGFALSEGILLGRNELYGVEEAYAPEGITLKLDVASAAFARLKARRRSMAGRTGCGLCGTESLAHVTRALPPLPEGPALSTRAVARGMRELASMQVLQKVTGAVHAAAWCSAEGEALLVREDVGRHNALDKLVGALARSSVPASTGFIAVTSRASFEMVQKTVAARVPLLAAVSASTSLATAIAEDAGLTLAGFVRGDDLVIYTHPWRLNGLPANA.

Cys117 acts as the Cysteine persulfide intermediate in catalysis.

Belongs to the FdhD family.

It localises to the cytoplasm. In terms of biological role, required for formate dehydrogenase (FDH) activity. Acts as a sulfur carrier protein that transfers sulfur from IscS to the molybdenum cofactor prior to its insertion into FDH. This is Sulfur carrier protein FdhD from Variovorax paradoxus (strain S110).